We begin with the raw amino-acid sequence, 206 residues long: Peptidyl-tRNA hydrolase (206 aa).

Tyrosine 14 contacts tRNA. Catalysis depends on histidine 19, which acts as the Proton acceptor. The tRNA site is built by phenylalanine 64 and asparagine 66. The interval 185–206 is disordered; that stretch reads VNGEAPKKSKDQAKEPANEQPR. A compositionally biased stretch (basic and acidic residues) spans 189–206; that stretch reads APKKSKDQAKEPANEQPR.

It belongs to the PTH family. In terms of assembly, monomer.

It localises to the cytoplasm. The enzyme catalyses an N-acyl-L-alpha-aminoacyl-tRNA + H2O = an N-acyl-L-amino acid + a tRNA + H(+). Its function is as follows. Hydrolyzes ribosome-free peptidyl-tRNAs (with 1 or more amino acids incorporated), which drop off the ribosome during protein synthesis, or as a result of ribosome stalling. Functionally, catalyzes the release of premature peptidyl moieties from peptidyl-tRNA molecules trapped in stalled 50S ribosomal subunits, and thus maintains levels of free tRNAs and 50S ribosomes. The protein is Peptidyl-tRNA hydrolase of Herpetosiphon aurantiacus (strain ATCC 23779 / DSM 785 / 114-95).